The sequence spans 199 residues: Imidazole glycerol phosphate synthase subunit HisH 2 (199 aa).

The Glutamine amidotransferase type-1 domain maps to 1–199; it reads MIAVIDVSGN…NNFLSLESTC (199 aa). Residue cysteine 76 is the Nucleophile of the active site. Active-site residues include histidine 177 and glutamate 179.

As to quaternary structure, heterodimer of HisH and HisF.

The protein resides in the cytoplasm. The catalysed reaction is 5-[(5-phospho-1-deoxy-D-ribulos-1-ylimino)methylamino]-1-(5-phospho-beta-D-ribosyl)imidazole-4-carboxamide + L-glutamine = D-erythro-1-(imidazol-4-yl)glycerol 3-phosphate + 5-amino-1-(5-phospho-beta-D-ribosyl)imidazole-4-carboxamide + L-glutamate + H(+). The enzyme catalyses L-glutamine + H2O = L-glutamate + NH4(+). The protein operates within amino-acid biosynthesis; L-histidine biosynthesis; L-histidine from 5-phospho-alpha-D-ribose 1-diphosphate: step 5/9. In terms of biological role, IGPS catalyzes the conversion of PRFAR and glutamine to IGP, AICAR and glutamate. The HisH subunit provides the glutamine amidotransferase activity that produces the ammonia necessary to HisF for the synthesis of IGP and AICAR. In Legionella pneumophila (strain Paris), this protein is Imidazole glycerol phosphate synthase subunit HisH 2.